A 364-amino-acid chain; its full sequence is S-adenosylmethionine:tRNA ribosyltransferase-isomerase (364 aa).

Belongs to the QueA family. Monomer.

The protein localises to the cytoplasm. It catalyses the reaction 7-aminomethyl-7-carbaguanosine(34) in tRNA + S-adenosyl-L-methionine = epoxyqueuosine(34) in tRNA + adenine + L-methionine + 2 H(+). It participates in tRNA modification; tRNA-queuosine biosynthesis. Functionally, transfers and isomerizes the ribose moiety from AdoMet to the 7-aminomethyl group of 7-deazaguanine (preQ1-tRNA) to give epoxyqueuosine (oQ-tRNA). This is S-adenosylmethionine:tRNA ribosyltransferase-isomerase from Bradyrhizobium sp. (strain ORS 278).